The following is a 1366-amino-acid chain: DNA-directed RNA polymerase subunit beta'' (1366 aa).

Residues Cys-220, Cys-290, Cys-297, and Cys-300 each coordinate Zn(2+).

The protein belongs to the RNA polymerase beta' chain family. RpoC2 subfamily. In terms of assembly, in plastids the minimal PEP RNA polymerase catalytic core is composed of four subunits: alpha, beta, beta', and beta''. When a (nuclear-encoded) sigma factor is associated with the core the holoenzyme is formed, which can initiate transcription. Zn(2+) serves as cofactor.

It localises to the plastid. The protein resides in the chloroplast. It catalyses the reaction RNA(n) + a ribonucleoside 5'-triphosphate = RNA(n+1) + diphosphate. Functionally, DNA-dependent RNA polymerase catalyzes the transcription of DNA into RNA using the four ribonucleoside triphosphates as substrates. In Lemna minor (Common duckweed), this protein is DNA-directed RNA polymerase subunit beta''.